The chain runs to 638 residues: ABC transporter G family member 12 (638 aa).

The disordered stretch occupies residues 42-61; sequence KQEKAKKKNDTESSTGDMNT. The region spanning 58-301 is the ABC transporter domain; sequence DMNTGVSTTI…SLGYPCPNNT (244 aa). 91 to 98 is an ATP binding site; the sequence is GPSGSGKS. Residues 374–633 enclose the ABC transmembrane type-2 domain; it reads GNFVARVGTA…WTSYLALHFL (260 aa). Transmembrane regions (helical) follow at residues 376-396, 410-430, 459-479, 484-504, 516-536, 544-564, and 612-632; these read FVARVGTAVVTGLLFGVCFAG, TIFFLITGLNLTPFAVISLFL, TLIVFLVALINAAICYLFAHL, GHFFFAIMVYFFVHLLSDFMI, MTFAYGSGLSVIYMLFAGFYV, SFGWLHWVNPLFYSFVSLVVN, and FGVVVAWTVFFFWTSYLALHF.

The protein belongs to the ABC transporter superfamily. ABCG family. Eye pigment precursor importer (TC 3.A.1.204) subfamily.

The protein resides in the membrane. The chain is ABC transporter G family member 12 (abcG12) from Dictyostelium discoideum (Social amoeba).